Reading from the N-terminus, the 228-residue chain is ATP-dependent dethiobiotin synthetase BioD (228 aa).

ATP is bound at residue 12–17 (EIGKTT). Residue Thr-16 participates in Mg(2+) binding. Lys-37 is an active-site residue. Ser-41 provides a ligand contact to substrate. ATP-binding positions include Asp-54, 116–119 (EGAG), and 205–207 (PRL). The Mg(2+) site is built by Asp-54 and Glu-116.

The protein belongs to the dethiobiotin synthetase family. In terms of assembly, homodimer. Requires Mg(2+) as cofactor.

The protein resides in the cytoplasm. It catalyses the reaction (7R,8S)-7,8-diammoniononanoate + CO2 + ATP = (4R,5S)-dethiobiotin + ADP + phosphate + 3 H(+). It participates in cofactor biosynthesis; biotin biosynthesis; biotin from 7,8-diaminononanoate: step 1/2. Functionally, catalyzes a mechanistically unusual reaction, the ATP-dependent insertion of CO2 between the N7 and N8 nitrogen atoms of 7,8-diaminopelargonic acid (DAPA, also called 7,8-diammoniononanoate) to form a ureido ring. This is ATP-dependent dethiobiotin synthetase BioD from Pseudomonas aeruginosa (strain UCBPP-PA14).